The primary structure comprises 821 residues: Probable phosphoenolpyruvate synthase (821 aa).

His444 acts as the Tele-phosphohistidine intermediate in catalysis. Substrate is bound by residues Arg543, Arg590, Glu687, Gly709, Thr710, Asn711, and Asp712. Glu687 provides a ligand contact to Mg(2+). Asp712 contributes to the Mg(2+) binding site. Cys759 (proton donor) is an active-site residue.

Belongs to the PEP-utilizing enzyme family. The cofactor is Mg(2+).

The enzyme catalyses pyruvate + ATP + H2O = phosphoenolpyruvate + AMP + phosphate + 2 H(+). Its pathway is carbohydrate biosynthesis; gluconeogenesis. Functionally, catalyzes the phosphorylation of pyruvate to phosphoenolpyruvate. The chain is Probable phosphoenolpyruvate synthase (ppsA) from Pyrococcus horikoshii (strain ATCC 700860 / DSM 12428 / JCM 9974 / NBRC 100139 / OT-3).